Reading from the N-terminus, the 294-residue chain is MFQGVYTAVITPFRQGKIDYDSYFKILENQIRSGVAGVVPCGTTGESPTLSYEEHKELIQKTVQVVSGKIQVIAGTGSNSTKEAIELTESACADGVDGILSVNPYYNKPTQEGMFQHFTAIANVSSKPVMLYNIPGRTNVNLLPETVSRLAAHPKIAAIKEATGDLGQMAKVISQCPTNFDLLSGDDNLTLPVLSIGGKGVVSVVSNLFPRACVDMVSLYLRGDLEASKKIYYKLLPVFVNAFIETNPIPIKAAMSWFGYCSNELRLPMTSLSEGTASESFKKIVFQLKEEGIV.

A pyruvate-binding site is contributed by T44. The active-site Proton donor/acceptor is Y132. K160 (schiff-base intermediate with substrate) is an active-site residue. Pyruvate is bound at residue V202.

This sequence belongs to the DapA family. Homotetramer; dimer of dimers.

The protein localises to the cytoplasm. The catalysed reaction is L-aspartate 4-semialdehyde + pyruvate = (2S,4S)-4-hydroxy-2,3,4,5-tetrahydrodipicolinate + H2O + H(+). It functions in the pathway amino-acid biosynthesis; L-lysine biosynthesis via DAP pathway; (S)-tetrahydrodipicolinate from L-aspartate: step 3/4. Functionally, catalyzes the condensation of (S)-aspartate-beta-semialdehyde [(S)-ASA] and pyruvate to 4-hydroxy-tetrahydrodipicolinate (HTPA). This is 4-hydroxy-tetrahydrodipicolinate synthase from Leptospira biflexa serovar Patoc (strain Patoc 1 / Ames).